Reading from the N-terminus, the 563-residue chain is MDTKTLIASEIAKVVPELEQDAIFNLLETPKNSDMGDLAFPAFSLAKVLRKAPQMIASELAEQIDESQFEKVVAVGPYINFFLDKVKISSQVLEQVITAGSDYAQQDEGQGRNVAIDMSSPNIAKPFSIGHLRSTVIGDSLANIFAKMGYQPVKINHLGDWGKQFGMLIVAYKKWGDEAAVQAHPIDELLKLYVRINAEAEIDPTVDEEAREWFRKLEDGDKEATELWQWFRDESLLEFNRLYDQLHVTFDSYNGEAFYNDKMDEVLALLEAKNLLVESKGAQVVTLEKYGIAPPPLIKKSDGATLHITRALAPALYRKRTYDFAKSVYVVGNEQAAHFKQLKAVLKEMGYDWSDDMTHVAFGLVTKGGAKLSTRKGNVILLEPTVAEAINRAASQIEAKNPNLADKEAVAHAVGVGAIKFYDLKTDRMNGYDFDLEAMVSFEGETGPYVQYAHARIQSILRKADFTPSATTTYSLADAESWEIIKLIQDFPRIIKRTSDNFEPSIMAKFAINLAQSFNKYYAHTRILDDNSERDNRLVLCYATATVLKEALRLLGVDAPNEM.

Positions 121 to 131 (PNIAKPFSIGH) match the 'HIGH' region motif.

The protein belongs to the class-I aminoacyl-tRNA synthetase family. As to quaternary structure, monomer.

The protein resides in the cytoplasm. The catalysed reaction is tRNA(Arg) + L-arginine + ATP = L-arginyl-tRNA(Arg) + AMP + diphosphate. In Streptococcus pyogenes serotype M49 (strain NZ131), this protein is Arginine--tRNA ligase.